The primary structure comprises 339 residues: Methylcobamide:CoM methyltransferase MtaA (339 aa).

Zn(2+) is bound by residues histidine 237, cysteine 239, and cysteine 316.

Belongs to the uroporphyrinogen decarboxylase family. MtbA/mtaA subfamily. It depends on Zn(2+) as a cofactor.

It catalyses the reaction methyl-Co(III)-[methanol-specific corrinoid protein] + coenzyme M = Co(I)-[methanol-specific corrinoid protein] + methyl-coenzyme M + H(+). In terms of biological role, methyltransferase involved in methanogenesis in the methanol pathway. Catalyzes the transfer of the methyl group from the methylated corrinoid protein MtaC to coenzyme M, forming the substrate for coenzyme-B sulfoethylthiotransferase. MtaC can be substituted by free cob(I)alamin in vitro. This chain is Methylcobamide:CoM methyltransferase MtaA (mtaA), found in Methanosarcina barkeri.